Consider the following 417-residue polypeptide: MSNESKICLVNEDSIYYRGYDIKDLTAVSSFEEVSFLLIYGELPTERELIEYRSELQHYRYIPESLKQVLERIPIYAHPIDVLKTACSFYSTISPESKQNDIYRISNRLIGSFPSILFYWYHFSSNGIRINTLTEVNDSFARHFLKLLNRGNNNNINNNNKFTTEQDEEPILEYVKALDVSLILYAEHGIETASTFSCRLSASTGSDVYSCIGSSIGTMKGVLDDGGSSEAVMYLLQPMKSPEDADKKIMKMINNNQRIIGFSNEFDQRTPIIKEWSKQLSIINKNNNNNNNNNNNNNNNNNNNNNNNNSEDDDDDNSLQTISERVEEIMFDVLKVHANVDFYNATVFHQSNIPTLLFSAISVIARTTGWMANIIEQRCQSKNSLPSLIYTGSDPIPFTPINERVYYHNFKIPNSNL.

The segment at 284-317 (NKNNNNNNNNNNNNNNNNNNNNNNNNSEDDDDDN) is disordered. The span at 286–309 (NNNNNNNNNNNNNNNNNNNNNNNN) shows a compositional bias: low complexity.

This sequence belongs to the citrate synthase family.

In Dictyostelium discoideum (Social amoeba), this protein is Citrate synthase-related protein DDB_G0287281.